Here is a 1872-residue protein sequence, read N- to C-terminus: E3 ubiquitin-protein ligase UBR2 (1872 aa).

Residues 96-172 (TACTRLCFPS…DAFKCKNELN (77 aa)) form a UBR-type zinc finger. Residue Lys709 forms a Glycyl lysine isopeptide (Lys-Gly) (interchain with G-Cter in ubiquitin) linkage. The tract at residues 1134-1240 (RYLMETAPHV…SSNTINSCCD (107 aa)) is interaction with UBC2. A disordered region spans residues 1203 to 1227 (NNSVDTSDISTPRTTSPSLSPTRIN). Over residues 1212–1225 (STPRTTSPSLSPTR) the composition is skewed to low complexity. Phosphoserine occurs at positions 1218 and 1222. The segment at 1241–1362 (DDCVFCKMPK…GLIYCPVCNS (122 aa)) adopts an RING-type; atypical zinc-finger fold.

It belongs to the E3 ubiquitin-protein ligase UBR1-like family. As to quaternary structure, interacts with MUB1, RPN4 and UBC2.

It is found in the cytoplasm. The enzyme catalyses S-ubiquitinyl-[E2 ubiquitin-conjugating enzyme]-L-cysteine + [acceptor protein]-L-lysine = [E2 ubiquitin-conjugating enzyme]-L-cysteine + N(6)-ubiquitinyl-[acceptor protein]-L-lysine.. Its pathway is protein modification; protein ubiquitination. Its function is as follows. E3 ubiquitin-protein ligase which probably functions outside the N-end rule pathway, since it lacks the residues essential for the degradation of N-end rule substrates. Mediates RPN4 ubiquitination and subsequent degradation. In Saccharomyces cerevisiae (strain ATCC 204508 / S288c) (Baker's yeast), this protein is E3 ubiquitin-protein ligase UBR2 (UBR2).